We begin with the raw amino-acid sequence, 699 residues long: Elongation factor G (699 aa).

Residues 8–288 (EDYRNFGIMA…AVVDYLPSPM (281 aa)) enclose the tr-type G domain. GTP is bound by residues 17 to 24 (AHIDAGKT), 86 to 90 (DTPGH), and 140 to 143 (NKMD).

It belongs to the TRAFAC class translation factor GTPase superfamily. Classic translation factor GTPase family. EF-G/EF-2 subfamily.

The protein resides in the cytoplasm. Functionally, catalyzes the GTP-dependent ribosomal translocation step during translation elongation. During this step, the ribosome changes from the pre-translocational (PRE) to the post-translocational (POST) state as the newly formed A-site-bound peptidyl-tRNA and P-site-bound deacylated tRNA move to the P and E sites, respectively. Catalyzes the coordinated movement of the two tRNA molecules, the mRNA and conformational changes in the ribosome. The polypeptide is Elongation factor G (Rhizobium leguminosarum bv. trifolii (strain WSM2304)).